The chain runs to 174 residues: Nicotinamide-nucleotide adenylyltransferase (174 aa).

This sequence belongs to the archaeal NMN adenylyltransferase family.

It is found in the cytoplasm. The enzyme catalyses beta-nicotinamide D-ribonucleotide + ATP + H(+) = diphosphate + NAD(+). It participates in cofactor biosynthesis; NAD(+) biosynthesis; NAD(+) from nicotinamide D-ribonucleotide: step 1/1. This Archaeoglobus fulgidus (strain ATCC 49558 / DSM 4304 / JCM 9628 / NBRC 100126 / VC-16) protein is Nicotinamide-nucleotide adenylyltransferase.